The primary structure comprises 437 residues: Ribosomal protein uS12 methylthiotransferase RimO (437 aa).

Residues 3 to 118 (KKFYITTLGC…AGKILREKFP (116 aa)) form the MTTase N-terminal domain. Residues Cys12, Cys48, Cys81, Cys157, Cys161, and Cys164 each contribute to the [4Fe-4S] cluster site. Residues 143-370 (NYSKPYAYVK…RDSHLEILEE (228 aa)) enclose the Radical SAM core domain. Residues 373–437 (ESRIGRTYDA…YEYDMNGTWV (65 aa)) enclose the TRAM domain.

The protein belongs to the methylthiotransferase family. RimO subfamily. It depends on [4Fe-4S] cluster as a cofactor.

The protein resides in the cytoplasm. The catalysed reaction is L-aspartate(89)-[ribosomal protein uS12]-hydrogen + (sulfur carrier)-SH + AH2 + 2 S-adenosyl-L-methionine = 3-methylsulfanyl-L-aspartate(89)-[ribosomal protein uS12]-hydrogen + (sulfur carrier)-H + 5'-deoxyadenosine + L-methionine + A + S-adenosyl-L-homocysteine + 2 H(+). Its function is as follows. Catalyzes the methylthiolation of an aspartic acid residue of ribosomal protein uS12. This chain is Ribosomal protein uS12 methylthiotransferase RimO, found in Leptospira interrogans serogroup Icterohaemorrhagiae serovar copenhageni (strain Fiocruz L1-130).